The primary structure comprises 317 residues: Xylose/arabinose import permease protein XacH (317 aa).

Transmembrane regions (helical) follow at residues 40 to 60 (GIPF…NFAI), 98 to 118 (LVLL…LAIL), 132 to 152 (VYLL…LWMF), 179 to 199 (IALG…TMVV), 241 to 261 (AAVV…ALVG), and 290 to 310 (AAIA…YLYY). The 216-residue stretch at 94-309 (AQNNLVLLVG…ALGVIGPYLY (216 aa)) folds into the ABC transmembrane type-1 domain.

It belongs to the binding-protein-dependent transport system permease family. The complex is composed of two ATP-binding proteins (XacJ and XacK), two transmembrane proteins (XacH and XacI) and a solute-binding protein (XacG).

The protein resides in the cell membrane. Its function is as follows. Part of the ABC transporter complex XacGHIJK involved in the uptake of xylose and arabinose. Responsible for the translocation of the substrate across the membrane. The chain is Xylose/arabinose import permease protein XacH from Haloferax volcanii (strain ATCC 29605 / DSM 3757 / JCM 8879 / NBRC 14742 / NCIMB 2012 / VKM B-1768 / DS2) (Halobacterium volcanii).